Here is a 360-residue protein sequence, read N- to C-terminus: Phosphoserine aminotransferase (360 aa).

Residue Arg41 coordinates L-glutamate. The pyridoxal 5'-phosphate site is built by Trp101, Thr152, Asp172, and Gln195. Lys196 is modified (N6-(pyridoxal phosphate)lysine). 237 to 238 contacts pyridoxal 5'-phosphate; it reads NT.

Belongs to the class-V pyridoxal-phosphate-dependent aminotransferase family. SerC subfamily. Homodimer. Pyridoxal 5'-phosphate is required as a cofactor.

It is found in the cytoplasm. The catalysed reaction is O-phospho-L-serine + 2-oxoglutarate = 3-phosphooxypyruvate + L-glutamate. The enzyme catalyses 4-(phosphooxy)-L-threonine + 2-oxoglutarate = (R)-3-hydroxy-2-oxo-4-phosphooxybutanoate + L-glutamate. It functions in the pathway amino-acid biosynthesis; L-serine biosynthesis; L-serine from 3-phospho-D-glycerate: step 2/3. Its pathway is cofactor biosynthesis; pyridoxine 5'-phosphate biosynthesis; pyridoxine 5'-phosphate from D-erythrose 4-phosphate: step 3/5. Its function is as follows. Catalyzes the reversible conversion of 3-phosphohydroxypyruvate to phosphoserine and of 3-hydroxy-2-oxo-4-phosphonooxybutanoate to phosphohydroxythreonine. The polypeptide is Phosphoserine aminotransferase (Paraburkholderia phymatum (strain DSM 17167 / CIP 108236 / LMG 21445 / STM815) (Burkholderia phymatum)).